Reading from the N-terminus, the 323-residue chain is Peroxisome biogenesis protein 20 (323 aa).

C8 is covalently cross-linked (Glycyl cysteine thioester (Cys-Gly) (interchain with G-Cter in ubiquitin)). K19 participates in a covalent cross-link: Glycyl lysine isopeptide (Lys-Gly) (interchain with G-Cter in ubiquitin). 3 consecutive short sequence motifs (wxxxF/Y motif) follow at residues 89-93, 102-105, and 141-145; these read WSSEF, WVED, and WTQEF.

This sequence belongs to the peroxisomal targeting signal receptor family. In terms of assembly, interacts (via WxxxF/Y and LVxEF motifs) with PEX14; promoting translocation through the PEX13-PEX14 docking complex. Interacts with PEX7. Post-translationally, monoubiquitinated at Cys-8 by PEX2 during PEX20 passage through the PEX2-PEX10-PEX12 retrotranslocation channel: monoubiquitination acts as a signal for PEX20 extraction and is required for proper export from peroxisomes and recycling. When PEX5 recycling is compromised, polyubiquitinated at Lys-19 by PEX10 during its passage through the retrotranslocation channel, leading to its degradation.

It localises to the cytoplasm. Its subcellular location is the cytosol. It is found in the peroxisome matrix. In terms of biological role, coreceptor required for the peroxisomal import of proteins containing a C-terminal PTS2-type peroxisomal targeting signal, such as 3-oxoacyl-CoA thiolase. Acts via its interaction with PEX7, promoting association between PEX7 bound to cargo proteins and the PEX13-PEX14 docking complex. PEX20 along with PEX7 and PTS2-containing cargo proteins are tranlocated into peroxisomes by passing through the PEX13-PEX14 docking complex. PEX20 coreceptor is then retrotranslocated into the cytosol, leading to release of bound cargo in the peroxisome matrix, and reset for a subsequent peroxisome import cycle. Also mediates peroxisomal import of proteins that do not contain PTS1- or PTS2-type peroxisomal targeting signals, such as acyl-CoA oxidases (Aox) izozymes. Import of acyl-CoA oxidases (Aox) izozymes is independent of PEX7. Required for PEX7 ubiquitination. This chain is Peroxisome biogenesis protein 20, found in Komagataella pastoris (Yeast).